The sequence spans 173 residues: Small ribosomal subunit protein uS5 (173 aa).

In terms of domain architecture, S5 DRBM spans 17-80 (WQERVIQIRR…ADGKKQLIDV (64 aa)).

It belongs to the universal ribosomal protein uS5 family. Part of the 30S ribosomal subunit. Contacts proteins S4 and S8.

Its function is as follows. With S4 and S12 plays an important role in translational accuracy. Located at the back of the 30S subunit body where it stabilizes the conformation of the head with respect to the body. This is Small ribosomal subunit protein uS5 from Crocosphaera subtropica (strain ATCC 51142 / BH68) (Cyanothece sp. (strain ATCC 51142)).